We begin with the raw amino-acid sequence, 419 residues long: tRNA (guanine-N(7)-)-methyltransferase non-catalytic subunit wuho (419 aa).

The span at 51–61 (STAEQQSAAAE) shows a compositional bias: low complexity. Residues 51 to 75 (STAEQQSAAAETGGGSVVEGEEPKD) are disordered. WD repeat units follow at residues 87 to 127 (APTV…AQLV), 174 to 213 (GHLS…DIHS), and 217 to 255 (GHKE…ELLR).

It belongs to the WD repeat TRM82 family. In terms of assembly, forms a heterodimer with the catalytic subunit Mettl1. Interacts with mei-P26 and weakly interacts with bgcn; required for the function or formation of the mei-P26-bgcn-bam-sxl complex. Interacts with nanos; may be involved in mei-P26-dependent derepression of the BMP signaling pathway. Interacts with Myc; the interaction may be mediated by mei-P26 and may be involved in the regulation of ribosome biogenesis. As to expression, in testis, it is present at high level in hub cells, a niche for germline stem cells of testis. Ubiquitously expressed in all testicular cells throughout spermatogenesis. Ubiquitously expressed in all germline and somatic cells of the ovary.

It is found in the nucleus. It localises to the cytoplasm. The protein operates within tRNA modification; N(7)-methylguanine-tRNA biosynthesis. Required for the Mettl1-dependent formation of N(7)-methylguanine at position 46 (m7G46) in tRNA. In the Mettl1-wuho methyltransferase complex, it is required to stabilize and induce conformational changes of the catalytic subunit. Required for binding of nanos mRNA and repression of translation by the mei-P26-bgcn-bam-sxl complex. May cooperate with mei-P26 and nanos to derepress the BMP signaling pathway. May cooperate with mei-P26 to suppress expression of a subset of microRNAs. May cooperate with mei-P26 to regulate bam expression levels in germline cells during gametogenesis. Required to promote mitosis to meiosis transition during gametogenesis. May regulate germline cell division in part by regulating ribosome biogenesis. This chain is tRNA (guanine-N(7)-)-methyltransferase non-catalytic subunit wuho, found in Drosophila willistoni (Fruit fly).